We begin with the raw amino-acid sequence, 282 residues long: HTH-type transcriptional activator RhaR (282 aa).

In terms of domain architecture, HTH araC/xylS-type spans 179 to 277 (DKLITALANS…GMTPSQWRHL (99 aa)). DNA-binding regions (H-T-H motif) lie at residues 196–217 (DAFCQQEQCSERVLRQQFRAQT) and 244–267 (VSEISMQCGFEDSNYFSVVFTRET).

Binds DNA as a dimer.

The protein localises to the cytoplasm. Its function is as follows. Activates expression of the rhaSR operon in response to L-rhamnose. This is HTH-type transcriptional activator RhaR from Salmonella choleraesuis (strain SC-B67).